The following is a 234-amino-acid chain: MTTANDAQQLISFIANAKKVTPVKVTYKGVLTGEIPATVQQFGGVSFGQLIGDWSEIQPLIAALPAENVFVENDARNSAVPLLDKKAVNARIEPGAIIRDQVTIGDNAVIMLGAVINIGAEIGSGTMIDMGAVLGGRAIVGEQSHIGAGAVLAGVIEPASAQPVRIGDHVLVGANAVVIEGVQVGDGAVVAAGAIVTKDVPANTVVAGVPAKIIKQIDSKTQQKTALIDALRGL.

Belongs to the transferase hexapeptide repeat family. DapH subfamily.

The catalysed reaction is (S)-2,3,4,5-tetrahydrodipicolinate + acetyl-CoA + H2O = L-2-acetamido-6-oxoheptanedioate + CoA. The protein operates within amino-acid biosynthesis; L-lysine biosynthesis via DAP pathway; LL-2,6-diaminopimelate from (S)-tetrahydrodipicolinate (acetylase route): step 1/3. Its function is as follows. Catalyzes the transfer of an acetyl group from acetyl-CoA to tetrahydrodipicolinate. This chain is 2,3,4,5-tetrahydropyridine-2,6-dicarboxylate N-acetyltransferase, found in Leuconostoc citreum (strain KM20).